We begin with the raw amino-acid sequence, 785 residues long: Semaphorin-3E (785 aa).

The first 25 residues, 1-25 (MLGRMASAQDLLILALCGLLLELPA), serve as a signal peptide directing secretion. The region spanning 36–520 (RLRLSHKELW…TESVIAQVKF (485 aa)) is the Sema domain. N-linked (GlcNAc...) asparagine glycosylation is present at asparagine 48. Cysteine 109 and cysteine 119 form a disulfide bridge. N-linked (GlcNAc...) asparagine glycosylation occurs at asparagine 130. Intrachain disulfides connect cysteine 137–cysteine 146, cysteine 274–cysteine 386, cysteine 298–cysteine 346, and cysteine 523–cysteine 541. The N-linked (GlcNAc...) asparagine glycan is linked to asparagine 600. The Ig-like C2-type domain occupies 651-740 (LDAGTYFCQT…EYCEKVWCTD (90 aa)). A disulfide bridge links cysteine 658 with cysteine 733. The interval 744–785 (KKLKMSPSKWKYANPQEKRQDQEKKARIRPEHYRLPRNIADS) is disordered. Residues 759–777 (QEKRQDQEKKARIRPEHYR) are compositionally biased toward basic and acidic residues.

It belongs to the semaphorin family. As to expression, collapsin-1, -2, -3, and -5 bind to overlapping but distinct axon tracts.

It is found in the secreted. Its function is as follows. Plays an important role in signaling via the cell surface receptor PLXND1. Mediates reorganization of the actin cytoskeleton, leading to the retraction of cell projections. Promotes focal adhesion disassembly and inhibits adhesion of endothelial cells to the extracellular matrix. Regulates angiogenesis. Can down-regulate sprouting angiogenesis. Required for normal vascular patterning during embryogenesis. Induces the collapse and paralysis of neuronal growth cones. Plays an important role in ensuring the specificity of synapse formation. In Gallus gallus (Chicken), this protein is Semaphorin-3E (SEMA3E).